The chain runs to 514 residues: MLVSKKPMVLVILDGYGYREEQQDNAIFSAKTPVMDALWANRPHTLIDASGLEVGLPDRQMGNSEVGHVNLGAGRIVYQDLTRLDVEIKDRAFFANPVLTGAVDKAKNAGKAVHIMGLLSAGGVHSHEDHIMAMVELAAERGAEKIYLHAFLDGRDTPPRSAESSLKKFEEKFAALGKGRVASIIGRYYAMDRDNRWDRVEKAYDLLTLAQGEFQADTAVAGLQAAYARDENDEFVKATVIRAEGQPDAAMEDGDALIFMNFRADRAREITRAFVNADFDGFARKKVVNVDFVMLTEYAADIKTAVAYPPASLVNTFGEWMAKNDKTQLRISETEKYAHVTFFFNGGVEESFKGEDRILINSPKVATYDLQPEMSSAELTEKLVAAIKSGKYDTIICNYPNGDMVGHTGVMEAAVKAVEALDHCVEEVAKAVESVGGQLLITADHGNAEQMRDPATGQAHTAHTNLPVPLIYVGDKNVKAVEGGKLSDIAPTMLSLMGMEIPQEMTGKPLFIVE.

2 residues coordinate Mn(2+): Asp14 and Ser64. Ser64 serves as the catalytic Phosphoserine intermediate. Residues His125, 155–156, Arg187, Arg193, 263–266, and Lys336 contribute to the substrate site; these read RD and RADR. Mn(2+)-binding residues include Asp403, His407, Asp444, His445, and His463.

Belongs to the BPG-independent phosphoglycerate mutase family. As to quaternary structure, monomer. Mn(2+) serves as cofactor.

The catalysed reaction is (2R)-2-phosphoglycerate = (2R)-3-phosphoglycerate. It participates in carbohydrate degradation; glycolysis; pyruvate from D-glyceraldehyde 3-phosphate: step 3/5. Its activity is regulated as follows. Insensitive to vanadate. In terms of biological role, catalyzes the interconversion of 2-phosphoglycerate (2-PGA) and 3-phosphoglycerate (3-PGA). The polypeptide is 2,3-bisphosphoglycerate-independent phosphoglycerate mutase (Escherichia coli (strain K12)).